The chain runs to 1059 residues: WD repeat-containing protein on Y chromosome (1059 aa).

WD repeat units lie at residues 121–161 (DFCP…ALTA), 170–209 (RSKT…FTLK), 214–256 (RLPQ…KVTT), 344–383 (CVPR…KPSV), 387–426 (GHTS…LLQT), 476–515 (SHTK…KMTI), 528–567 (LEPV…CMRT), 616–658 (QHSD…RRYD), 714–759 (MRQL…GFKG), 766–805 (MAGD…IPNE), and 849–888 (AHRA…IGLL).

The protein is WD repeat-containing protein on Y chromosome of Anopheles gambiae (African malaria mosquito).